The following is a 152-amino-acid chain: Heavy metal-associated isoprenylated plant protein 22 (152 aa).

The region spanning 28 to 91 (MQTVNIKVKI…TVQSTGKKKA (64 aa)) is the HMA domain. Positions 39 and 42 each coordinate a metal cation. Residues 123 to 152 (SEQAQAQPGSTDDKLMSLFSDENPNACTVM) form a disordered region. A compositionally biased stretch (polar residues) spans 142–152 (SDENPNACTVM). Position 149 is a cysteine methyl ester (cysteine 149). Cysteine 149 is lipidated: S-farnesyl cysteine. Positions 150–152 (TVM) are cleaved as a propeptide — removed in mature form.

The protein belongs to the HIPP family. As to quaternary structure, interacts with ZHD11/HB29. As to expression, expressed in lateral roots and mature anthers.

The protein localises to the membrane. Its function is as follows. Heavy-metal-binding protein. Binds cadmium. May be involved in cadmium transport and play a role in cadmium detoxification. The chain is Heavy metal-associated isoprenylated plant protein 22 from Arabidopsis thaliana (Mouse-ear cress).